A 115-amino-acid polypeptide reads, in one-letter code: Large ribosomal subunit protein bL19 (115 aa).

The protein belongs to the bacterial ribosomal protein bL19 family.

Its function is as follows. This protein is located at the 30S-50S ribosomal subunit interface and may play a role in the structure and function of the aminoacyl-tRNA binding site. The polypeptide is Large ribosomal subunit protein bL19 (Bacillus pumilus (strain SAFR-032)).